We begin with the raw amino-acid sequence, 471 residues long: Histidinol dehydrogenase (471 aa).

NAD(+) contacts are provided by Tyr-139, Gln-204, and Asn-236. Residues Thr-259, Gln-281, and His-284 each contribute to the substrate site. Zn(2+)-binding residues include Gln-281 and His-284. Catalysis depends on proton acceptor residues Glu-350 and His-351. Substrate is bound by residues His-351, Asp-384, Glu-438, and His-443. Asp-384 contributes to the Zn(2+) binding site. Residue His-443 coordinates Zn(2+).

Belongs to the histidinol dehydrogenase family. The cofactor is Zn(2+).

The enzyme catalyses L-histidinol + 2 NAD(+) + H2O = L-histidine + 2 NADH + 3 H(+). The protein operates within amino-acid biosynthesis; L-histidine biosynthesis; L-histidine from 5-phospho-alpha-D-ribose 1-diphosphate: step 9/9. Its function is as follows. Catalyzes the sequential NAD-dependent oxidations of L-histidinol to L-histidinaldehyde and then to L-histidine. This Bifidobacterium longum (strain NCC 2705) protein is Histidinol dehydrogenase.